A 236-amino-acid chain; its full sequence is Small ribosomal subunit protein uS2c (236 aa).

Belongs to the universal ribosomal protein uS2 family.

Its subcellular location is the plastid. It localises to the chloroplast. This Chloranthus spicatus (Chulantree) protein is Small ribosomal subunit protein uS2c (rps2).